The sequence spans 200 residues: NADH-quinone oxidoreductase subunit C 1 (200 aa).

This sequence belongs to the complex I 30 kDa subunit family. NDH-1 is composed of 14 different subunits. Subunits NuoB, C, D, E, F, and G constitute the peripheral sector of the complex.

Its subcellular location is the cell inner membrane. The catalysed reaction is a quinone + NADH + 5 H(+)(in) = a quinol + NAD(+) + 4 H(+)(out). Its function is as follows. NDH-1 shuttles electrons from NADH, via FMN and iron-sulfur (Fe-S) centers, to quinones in the respiratory chain. The immediate electron acceptor for the enzyme in this species is believed to be ubiquinone. Couples the redox reaction to proton translocation (for every two electrons transferred, four hydrogen ions are translocated across the cytoplasmic membrane), and thus conserves the redox energy in a proton gradient. The sequence is that of NADH-quinone oxidoreductase subunit C 1 from Rhizobium etli (strain CIAT 652).